The sequence spans 171 residues: Adenine phosphoribosyltransferase (171 aa).

The protein belongs to the purine/pyrimidine phosphoribosyltransferase family. As to quaternary structure, homodimer.

The protein localises to the cytoplasm. The catalysed reaction is AMP + diphosphate = 5-phospho-alpha-D-ribose 1-diphosphate + adenine. It functions in the pathway purine metabolism; AMP biosynthesis via salvage pathway; AMP from adenine: step 1/1. Its function is as follows. Catalyzes a salvage reaction resulting in the formation of AMP, that is energically less costly than de novo synthesis. This is Adenine phosphoribosyltransferase (apt) from Prochlorococcus marinus subsp. pastoris (strain CCMP1986 / NIES-2087 / MED4).